The chain runs to 173 residues: NEDD4-binding protein 2-like 1 (173 aa).

Residues M1 to P35 are disordered. Over residues Q18–G32 the composition is skewed to pro residues.

In terms of assembly, interacts with dynactin subunit proteins, including DCTN4, DCTN5 and DCTN5.

Functionally, might play a role in adipocyte differentiation and triglyceride accumulation. The chain is NEDD4-binding protein 2-like 1 (N4BP2L1) from Bos taurus (Bovine).